Reading from the N-terminus, the 693-residue chain is Elongation factor G (693 aa).

The region spanning 6-286 (KYTRNIGIAA…AICRYLPSPI (281 aa)) is the tr-type G domain. GTP contacts are provided by residues 15-22 (AHIDAGKT), 83-87 (DTPGH), and 137-140 (NKMD).

This sequence belongs to the TRAFAC class translation factor GTPase superfamily. Classic translation factor GTPase family. EF-G/EF-2 subfamily.

The protein resides in the cytoplasm. Catalyzes the GTP-dependent ribosomal translocation step during translation elongation. During this step, the ribosome changes from the pre-translocational (PRE) to the post-translocational (POST) state as the newly formed A-site-bound peptidyl-tRNA and P-site-bound deacylated tRNA move to the P and E sites, respectively. Catalyzes the coordinated movement of the two tRNA molecules, the mRNA and conformational changes in the ribosome. This Karelsulcia muelleri (strain GWSS) (Sulcia muelleri) protein is Elongation factor G.